Here is a 162-residue protein sequence, read N- to C-terminus: MIRALFSLFRSLHANTHPADLAHAAALALALALLPRSSLLWYLLFAVCFFIRLNRGLLLLSLVLFGFVVPSFDPWLDSLGNWALCLPRLQPVYRALIEIPFVGLARFYNTMIAGGLVAGALCYLPCYALARCAVTAYRTYLYPKIHHATIFFLVRNAPLCKR.

3 consecutive transmembrane segments (helical) span residues 28–50, 57–76, and 108–130; these read ALAL…VCFF, LLLL…DPWL, and YNTM…YALA.

It is found in the cell membrane. This is an uncharacterized protein from Treponema pallidum (strain Nichols).